A 530-amino-acid polypeptide reads, in one-letter code: Neutral amino acid transporter A (530 aa).

N-acetylmethionine is present on Met-1. Over residues 1 to 10 the composition is skewed to polar residues; that stretch reads MEKSSETNGY. The tract at residues 1-28 is disordered; that stretch reads MEKSSETNGYLDSAQEGPAAGPGEPGTT. The Cytoplasmic segment spans residues 1 to 41; it reads MEKSSETNGYLDSAQEGPAAGPGEPGTTARRAGRCAGFLRR. A compositionally biased stretch (low complexity) spans 16 to 28; it reads EGPAAGPGEPGTT. 3 consecutive transmembrane segments (helical) span residues 42 to 62, 88 to 108, and 119 to 139; these read HGLV…GAAL, MIIL…LDAS, and AYFG…AFII. Over 140-216 the chain is Extracellular; that stretch reads KPGSGSQTLQ…VTIEKIPIGT (77 aa). Residue Asn-201 is glycosylated (N-linked (GlcNAc...) asparagine). 6 helical membrane passes run 217–237, 257–277, 298–318, 328–348, 373–393, and 418–438; these read EIEG…GVAL, ATMV…MFLV, IFTS…LIYF, FLLG…SSAT, IGAT…AVFI, and VGAA…LEAI. Residues 488 to 530 form a disordered region; the sequence is ELSEVKVEAIPNSKSEEETSPLVTHPNPTGPAASTPESKESVL. Phosphoserine occurs at positions 507, 525, and 528.

Belongs to the dicarboxylate/amino acid:cation symporter (DAACS) (TC 2.A.23) family. SLC1A4 subfamily.

The protein resides in the membrane. Its subcellular location is the melanosome. It catalyses the reaction L-threonine(in) + Na(+)(in) = L-threonine(out) + Na(+)(out). The enzyme catalyses L-serine(in) + Na(+)(in) = L-serine(out) + Na(+)(out). It carries out the reaction L-cysteine(in) + Na(+)(in) = L-cysteine(out) + Na(+)(out). The catalysed reaction is L-alanine(in) + Na(+)(in) = L-alanine(out) + Na(+)(out). It catalyses the reaction L-proline(in) + Na(+)(in) = L-proline(out) + Na(+)(out). The enzyme catalyses 4-hydroxy-L-proline(in) + Na(+)(in) = 4-hydroxy-L-proline(out) + Na(+)(out). Functionally, sodium-dependent neutral amino-acid transporter that mediates transport of alanine, serine, cysteine, proline, hydroxyproline and threonine. This Bos taurus (Bovine) protein is Neutral amino acid transporter A (SLC1A4).